A 516-amino-acid polypeptide reads, in one-letter code: Probable metalloreductase AIM14 (516 aa).

The next 7 helical transmembrane spans lie at 18 to 38, 64 to 84, 97 to 117, 128 to 148, 168 to 188, 195 to 215, and 217 to 237; these read IGYG…LLLL, LHLP…YSVI, LSYV…YILS, HMWL…AFVI, LLGF…TGVI, SFYM…PVHA, and PGVA…HALA. Positions 94–207 constitute a Ferric oxidoreductase domain; sequence LGRLSYVLLF…MVHQINAFAI (114 aa). The FAD-binding FR-type domain maps to 238-363; that stretch reads RVSFCMSSAV…GGTGISLGLP (126 aa).

It belongs to the ferric reductase (FRE) family. AIM14 subfamily.

It is found in the membrane. Functionally, probable cell surface metalloreductase. May be involved in iron or copper homeostasis. This is Probable metalloreductase AIM14 (AIM14) from Eremothecium gossypii (strain ATCC 10895 / CBS 109.51 / FGSC 9923 / NRRL Y-1056) (Yeast).